The chain runs to 628 residues: Kelch-like protein diablo (628 aa).

The disordered stretch occupies residues Met1–His56. A compositionally biased stretch (low complexity) spans Pro14 to Asn29. The BTB domain maps to Cys74–Glu141. Residues Cys176 to Gly278 enclose the BACK domain. Kelch repeat units follow at residues Val325–Asp371, Leu373–Gly419, Phe420–Gly466, Leu468–Asn513, Ile515–Gly560, and Gln561–Ala607.

It participates in protein modification; protein ubiquitination. Probable substrate-specific adapter of an E3 ubiquitin-protein ligase complex which mediates the ubiquitination and subsequent proteasomal degradation of target proteins. May have a role in synapse differentiation and growth. This is Kelch-like protein diablo from Drosophila pseudoobscura pseudoobscura (Fruit fly).